The sequence spans 354 residues: Uroporphyrinogen decarboxylase (354 aa).

Substrate-binding positions include 27 to 31, D77, Y154, T209, and H327; that span reads RQAGR.

It belongs to the uroporphyrinogen decarboxylase family. Homodimer.

It is found in the cytoplasm. It carries out the reaction uroporphyrinogen III + 4 H(+) = coproporphyrinogen III + 4 CO2. Its pathway is porphyrin-containing compound metabolism; protoporphyrin-IX biosynthesis; coproporphyrinogen-III from 5-aminolevulinate: step 4/4. In terms of biological role, catalyzes the decarboxylation of four acetate groups of uroporphyrinogen-III to yield coproporphyrinogen-III. This chain is Uroporphyrinogen decarboxylase, found in Pectobacterium carotovorum subsp. carotovorum (strain PC1).